The sequence spans 229 residues: Prolactin (229 aa).

The signal sequence occupies residues M1–S30. A disulfide bridge connects residues C34 and C41. S56, S64, and S120 each carry phosphoserine. Intrachain disulfides connect C88–C204 and C221–C229.

Belongs to the somatotropin/prolactin family. In terms of assembly, interacts with PRLR.

The protein resides in the secreted. Its function is as follows. Prolactin acts primarily on the mammary gland by promoting lactation. The polypeptide is Prolactin (PRL) (Ailuropoda melanoleuca (Giant panda)).